A 125-amino-acid polypeptide reads, in one-letter code: Small ribosomal subunit protein uS12 (125 aa).

The residue at position 89 (Asp89) is a 3-methylthioaspartic acid. Residues Gly106–Ala125 are disordered. Residues Ser113 to Ala125 are compositionally biased toward basic residues.

This sequence belongs to the universal ribosomal protein uS12 family. In terms of assembly, part of the 30S ribosomal subunit. Contacts proteins S8 and S17. May interact with IF1 in the 30S initiation complex.

In terms of biological role, with S4 and S5 plays an important role in translational accuracy. Its function is as follows. Interacts with and stabilizes bases of the 16S rRNA that are involved in tRNA selection in the A site and with the mRNA backbone. Located at the interface of the 30S and 50S subunits, it traverses the body of the 30S subunit contacting proteins on the other side and probably holding the rRNA structure together. The combined cluster of proteins S8, S12 and S17 appears to hold together the shoulder and platform of the 30S subunit. The chain is Small ribosomal subunit protein uS12 from Aromatoleum aromaticum (strain DSM 19018 / LMG 30748 / EbN1) (Azoarcus sp. (strain EbN1)).